We begin with the raw amino-acid sequence, 253 residues long: 3-dehydroquinate dehydratase (253 aa).

Residues 46-48 and Arg-82 contribute to the 3-dehydroquinate site; that span reads EWR. His-143 acts as the Proton donor/acceptor in catalysis. The Schiff-base intermediate with substrate role is filled by Lys-170. Arg-213, Ser-232, and Gln-236 together coordinate 3-dehydroquinate.

Belongs to the type-I 3-dehydroquinase family. Homodimer.

It catalyses the reaction 3-dehydroquinate = 3-dehydroshikimate + H2O. It participates in metabolic intermediate biosynthesis; chorismate biosynthesis; chorismate from D-erythrose 4-phosphate and phosphoenolpyruvate: step 3/7. Its function is as follows. Involved in the third step of the chorismate pathway, which leads to the biosynthesis of aromatic amino acids. Catalyzes the cis-dehydration of 3-dehydroquinate (DHQ) and introduces the first double bond of the aromatic ring to yield 3-dehydroshikimate. This chain is 3-dehydroquinate dehydratase, found in Bacillus velezensis (strain DSM 23117 / BGSC 10A6 / LMG 26770 / FZB42) (Bacillus amyloliquefaciens subsp. plantarum).